The following is a 381-amino-acid chain: MDLSGSRDVISSLPDDISSHILSFLPTKEAASTSVLSKKWRYLFAFVPNLDLDDSVYLNPENETEISTSFMDFVDRVLALQGNSPLHKFSLKIGDGIDPVRIIPWINNVLERGVSDLDLHLNLESEFLLPSQVYLCKTLVWLKLRFGLYPTIDVEDVHLPKLKTLYIEATHFEEHGVGLTKLLSGCPMLEDLVLDDISWFIWDFASVSVPTLKRLRFSWQERDEFPKSVLLDTPNLVYLKFTDTVAGKYPKVNLDSLVEAHIDLRLLKPLLINYHQGYGENDMVGNATDFIMRICNVKTLYLSANTLQVLTYSCDAIPIFNNLTHLTIESNPRVGWQSVPGLLKNSPNLETLIFQGLIHKATYRCGDVCLCKKPRKEILSC.

The F-box domain maps to 7-60; the sequence is RDVISSLPDDISSHILSFLPTKEAASTSVLSKKWRYLFAFVPNLDLDDSVYLNP. LRR repeat units lie at residues 118–146, 171–196, 218–243, 249–274, 299–330, and 331–356; these read DLHL…KLRF, HFEE…VLDD, SWQE…KFTD, YPKV…LINY, TLYL…TIES, and NPRV…IFQG.

This chain is F-box/LRR-repeat protein At4g14103, found in Arabidopsis thaliana (Mouse-ear cress).